The following is a 167-amino-acid chain: Peptide deformylase (167 aa).

Fe cation contacts are provided by Cys-91 and His-133. Glu-134 is an active-site residue. Fe cation is bound at residue His-137.

The protein belongs to the polypeptide deformylase family. Fe(2+) is required as a cofactor.

The enzyme catalyses N-terminal N-formyl-L-methionyl-[peptide] + H2O = N-terminal L-methionyl-[peptide] + formate. Removes the formyl group from the N-terminal Met of newly synthesized proteins. Requires at least a dipeptide for an efficient rate of reaction. N-terminal L-methionine is a prerequisite for activity but the enzyme has broad specificity at other positions. This is Peptide deformylase from Tolumonas auensis (strain DSM 9187 / NBRC 110442 / TA 4).